The sequence spans 207 residues: Dephospho-CoA kinase (207 aa).

The DPCK domain occupies 10–207 (TLGLTGGIGS…FYLTLRGGQS (198 aa)). Residue 18-23 (GSGKSA) coordinates ATP.

Belongs to the CoaE family.

It localises to the cytoplasm. It carries out the reaction 3'-dephospho-CoA + ATP = ADP + CoA + H(+). Its pathway is cofactor biosynthesis; coenzyme A biosynthesis; CoA from (R)-pantothenate: step 5/5. In terms of biological role, catalyzes the phosphorylation of the 3'-hydroxyl group of dephosphocoenzyme A to form coenzyme A. The polypeptide is Dephospho-CoA kinase (Pseudomonas fluorescens (strain ATCC BAA-477 / NRRL B-23932 / Pf-5)).